Reading from the N-terminus, the 353-residue chain is Photosystem II protein D1 (353 aa).

Position 2 is an N-acetylthreonine (Thr2). Position 2 is a phosphothreonine (Thr2). Helical transmembrane passes span 29–46, 118–133, and 142–156; these read YIGWFGVLMIPTLLTATS, HFLLGVACYMGREWEL, and WIAVAYSAPVAAATA. His118 provides a ligand contact to chlorophyll a. Pheophytin a is bound at residue Tyr126. Asp170 and Glu189 together coordinate [CaMn4O5] cluster. A helical membrane pass occupies residues 197-218; it reads FHMLGVAGVFGGSLFSAMHGSL. His198 serves as a coordination point for chlorophyll a. A quinone is bound by residues His215 and 264-265; that span reads SF. A Fe cation-binding site is contributed by His215. A Fe cation-binding site is contributed by His272. Residues 274-288 form a helical membrane-spanning segment; it reads FLAAWPVVGIWFTAL. [CaMn4O5] cluster-binding residues include His332, Glu333, Asp342, and Ala344. A propeptide spanning residues 345 to 353 is cleaved from the precursor; that stretch reads AVESPSING.

This sequence belongs to the reaction center PufL/M/PsbA/D family. In terms of assembly, PSII is composed of 1 copy each of membrane proteins PsbA, PsbB, PsbC, PsbD, PsbE, PsbF, PsbH, PsbI, PsbJ, PsbK, PsbL, PsbM, PsbT, PsbX, PsbY, PsbZ, Psb30/Ycf12, at least 3 peripheral proteins of the oxygen-evolving complex and a large number of cofactors. It forms dimeric complexes. The cofactor is The D1/D2 heterodimer binds P680, chlorophylls that are the primary electron donor of PSII, and subsequent electron acceptors. It shares a non-heme iron and each subunit binds pheophytin, quinone, additional chlorophylls, carotenoids and lipids. D1 provides most of the ligands for the Mn4-Ca-O5 cluster of the oxygen-evolving complex (OEC). There is also a Cl(-1) ion associated with D1 and D2, which is required for oxygen evolution. The PSII complex binds additional chlorophylls, carotenoids and specific lipids.. In terms of processing, tyr-161 forms a radical intermediate that is referred to as redox-active TyrZ, YZ or Y-Z. Post-translationally, C-terminally processed by CTPA; processing is essential to allow assembly of the oxygen-evolving complex and thus photosynthetic growth.

The protein localises to the plastid. It is found in the chloroplast thylakoid membrane. It catalyses the reaction 2 a plastoquinone + 4 hnu + 2 H2O = 2 a plastoquinol + O2. Functionally, photosystem II (PSII) is a light-driven water:plastoquinone oxidoreductase that uses light energy to abstract electrons from H(2)O, generating O(2) and a proton gradient subsequently used for ATP formation. It consists of a core antenna complex that captures photons, and an electron transfer chain that converts photonic excitation into a charge separation. The D1/D2 (PsbA/PsbD) reaction center heterodimer binds P680, the primary electron donor of PSII as well as several subsequent electron acceptors. This chain is Photosystem II protein D1, found in Sinapis alba (White mustard).